The chain runs to 400 residues: 3-hydroxybenzoate 6-hydroxylase (400 aa).

It belongs to the 3-hydroxybenzoate 6-hydroxylase family. Monomer. The cofactor is FAD.

It catalyses the reaction 3-hydroxybenzoate + NADH + O2 + H(+) = 2,5-dihydroxybenzoate + NAD(+) + H2O. Its function is as follows. Catalyzes the NAD- or NADP-dependent conversion of 3-hydroxybenzoate to gentisate. The affinity of the enzyme toward NAD is twice as high as for NADP. The chain is 3-hydroxybenzoate 6-hydroxylase (nagX) from Polaromonas naphthalenivorans (strain CJ2).